Here is a 479-residue protein sequence, read N- to C-terminus: Ribosomal RNA small subunit methyltransferase F (479 aa).

S-adenosyl-L-methionine-binding positions include 125–131 (AAAPGSK), Glu149, Asp176, and Asp194. The active-site Nucleophile is the Cys247.

Belongs to the class I-like SAM-binding methyltransferase superfamily. RsmB/NOP family.

It is found in the cytoplasm. It catalyses the reaction cytidine(1407) in 16S rRNA + S-adenosyl-L-methionine = 5-methylcytidine(1407) in 16S rRNA + S-adenosyl-L-homocysteine + H(+). In terms of biological role, specifically methylates the cytosine at position 1407 (m5C1407) of 16S rRNA. In Escherichia coli O81 (strain ED1a), this protein is Ribosomal RNA small subunit methyltransferase F.